A 1077-amino-acid chain; its full sequence is Eukaryotic translation initiation factor 2-alpha kinase pek-1 (1077 aa).

The signal sequence occupies residues 1-23 (MSVYYIVLAGFLLFMALVPFNAG). Residues 24–453 (QQYIDDDIEV…ITLMQTIFSY (430 aa)) are Lumenal-facing. A glycan (N-linked (GlcNAc...) asparagine) is linked at Asn-206. Residues 454 to 474 (IFNPTAVVSFLAGLIGVTVAV) form a helical membrane-spanning segment. At 475-1077 (VYNKIAKSSP…HEVATHKFLQ (603 aa)) the chain is on the cytoplasmic side. A Protein kinase domain is found at 604 to 1076 (FEVKKVIGHG…AHEVATHKFL (473 aa)). Residues 610 to 618 (IGHGGFGVV) and Lys-633 contribute to the ATP site. Positions 727–834 (MPPVVGNTTD…FVDGSDDVDN (108 aa)) are disordered. Residues 732 to 746 (GNTTDAENSWSTSAK) are compositionally biased toward polar residues. Over residues 766-778 (GSDRTTAELKEES) the composition is skewed to basic and acidic residues. Residues 783-796 (ESDEESDTTEDSSS) show a composition bias toward acidic residues. Positions 797–808 (SDESPSSSSGSS) are enriched in low complexity. Catalysis depends on Asp-933, which acts as the Proton acceptor.

The protein belongs to the protein kinase superfamily. Ser/Thr protein kinase family. GCN2 subfamily. As to quaternary structure, forms dimers with HSPA5/BIP in resting cells. Oligomerizes in ER-stressed cells. Post-translationally, autophosphorylated. N-glycosylated. In terms of tissue distribution, expressed in intestinal cells.

The protein resides in the endoplasmic reticulum membrane. The catalysed reaction is L-seryl-[protein] + ATP = O-phospho-L-seryl-[protein] + ADP + H(+). It carries out the reaction L-threonyl-[protein] + ATP = O-phospho-L-threonyl-[protein] + ADP + H(+). With respect to regulation, perturbation in protein folding in the endoplasmic reticulum (ER) promotes reversible dissociation from HSPA5/BIP and oligomerization, resulting in transautophosphorylation and kinase activity induction. Its function is as follows. Phosphorylates the alpha subunit of eukaryotic translation-initiation factor 2 (eIF2alpha), leading to its inactivation and thus to a rapid reduction of translational initiation and repression of global protein synthesis. May phosphorylate eIF2alpha during hypoxia. Proposed to have a role in alleviating endoplasmic reticulum stress. The sequence is that of Eukaryotic translation initiation factor 2-alpha kinase pek-1 (pek-1) from Caenorhabditis elegans.